A 451-amino-acid chain; its full sequence is Glucose-6-phosphate isomerase (451 aa).

At Thr-38 the chain carries Phosphothreonine. Glu-290 acts as the Proton donor in catalysis. Residues His-311 and Lys-425 contribute to the active site.

This sequence belongs to the GPI family.

It is found in the cytoplasm. It carries out the reaction alpha-D-glucose 6-phosphate = beta-D-fructose 6-phosphate. It functions in the pathway carbohydrate biosynthesis; gluconeogenesis. The protein operates within carbohydrate degradation; glycolysis; D-glyceraldehyde 3-phosphate and glycerone phosphate from D-glucose: step 2/4. Functionally, catalyzes the reversible isomerization of glucose-6-phosphate to fructose-6-phosphate. This chain is Glucose-6-phosphate isomerase, found in Shouchella clausii (strain KSM-K16) (Alkalihalobacillus clausii).